Here is a 33-residue protein sequence, read N- to C-terminus: Potassium channel toxin alpha-KTx 24.1 (33 aa).

Cystine bridges form between C4-C23, C9-C28, C13-C30, and C18-C33.

It belongs to the short scorpion toxin superfamily. Potassium channel inhibitor family. Alpha-KTx 24 subfamily. Post-translationally, contains 4 disulfide bonds. In terms of tissue distribution, expressed by the venom gland.

It localises to the secreted. In terms of biological role, reversibly blocks voltage-gated potassium channels Kv1.2/KCNA2, Kv1.3/KCNA3 and, weakly, Shaker B. This chain is Potassium channel toxin alpha-KTx 24.1, found in Pandinus imperator (Emperor scorpion).